A 488-amino-acid chain; its full sequence is Auxin transporter-like protein 1 (488 aa).

The segment at 1-36 (MSGEKQAEESIVVSGEDEVAGRKVEDSAAEEDIDGN) is disordered. The Cytoplasmic portion of the chain corresponds to 1–64 (MSGEKQAEES…DAWFSCASNQ (64 aa)). The helical transmembrane segment at 65–82 (VAQVLLTLPYSFSQLGML) threads the bilayer. Residues 83–84 (SG) lie on the Extracellular side of the membrane. Residues 85 to 105 (ILLQIFYGLMGSWTAYLISVL) form a helical membrane-spanning segment. Residues 106-141 (YVEYRARMEKQEAKSFKNHVIQWFEVLDGLLGPYWK) are Cytoplasmic-facing. A helical transmembrane segment spans residues 142–162 (AAGLAFNCTFLLFGSVIQLIA). The Extracellular portion of the chain corresponds to 163–178 (CASNIYYINDRLDKRT). The chain crosses the membrane as a helical span at residues 179-199 (WTYIFGACCATTVFIPSFHNY). Residues 200–202 (RIW) lie on the Cytoplasmic side of the membrane. Residues 203 to 223 (SFLGLGMTTYTAWYLTIASFL) traverse the membrane as a helical segment. Residues 224–238 (HGQAEGVTHSGPTKL) are Extracellular-facing. The chain crosses the membrane as a helical span at residues 239-259 (VLYFTGATNILYTFGGHAVTV). Residues 260-273 (EIMHAMWKPRKFKS) are Cytoplasmic-facing. A helical membrane pass occupies residues 274 to 294 (IYLMATLYVFTLTLPSASAVY). Residues 295–320 (WAFGDQLLNHSNAFSLLPKTRFRDTA) lie on the Extracellular side of the membrane. N-linked (GlcNAc...) asparagine glycosylation is present at asparagine 303. The chain crosses the membrane as a helical span at residues 321-341 (VILMLIHQFITFGFACTPLYF). The Cytoplasmic portion of the chain corresponds to 342–362 (VWEKAIGMHHTKSLCLRALVR). The helical transmembrane segment at 363–383 (LPVVVPIWFLAIIFPFFGPIN) threads the bilayer. Serine 384 is a topological domain (extracellular). The chain crosses the membrane as a helical span at residues 385–405 (AVGALLVTFTVYIIPALAHML). Residues 406–427 (TYRTASARRNAAEKPPFFIPSW) are Cytoplasmic-facing. A helical membrane pass occupies residues 428 to 448 (AGVYVINAFIVVWVLVLGFGF). Over 449–488 (GGWASMTNFIRQIDTFGLFAKCYQCKPPPAPIAAGAHHRR) the chain is Extracellular.

It belongs to the amino acid/polyamine transporter 2 family. Amino acid/auxin permease (AAAP) (TC 2.A.18.1) subfamily.

It is found in the cell membrane. Its function is as follows. Carrier protein involved in proton-driven auxin influx. Mediates the formation of auxin gradient from developing leaves (site of auxin biosynthesis) to tips by contributing to the loading of auxin in vascular tissues and facilitating acropetal (base to tip) auxin transport within inner tissues of the root apex, and basipetal (tip to base) auxin transport within outer tissues of the root apex. The protein is Auxin transporter-like protein 1 (LAX1) of Arabidopsis thaliana (Mouse-ear cress).